Here is a 35-residue protein sequence, read N- to C-terminus: Photosystem II reaction center protein T (35 aa).

Residues 3–23 (ALVYTFLLVSTLGIIFFAIFF) form a helical membrane-spanning segment.

This sequence belongs to the PsbT family. As to quaternary structure, PSII is composed of 1 copy each of membrane proteins PsbA, PsbB, PsbC, PsbD, PsbE, PsbF, PsbH, PsbI, PsbJ, PsbK, PsbL, PsbM, PsbT, PsbY, PsbZ, Psb30/Ycf12, at least 3 peripheral proteins of the oxygen-evolving complex and a large number of cofactors. It forms dimeric complexes.

Its subcellular location is the plastid. The protein resides in the chloroplast thylakoid membrane. In terms of biological role, found at the monomer-monomer interface of the photosystem II (PS II) dimer, plays a role in assembly and dimerization of PSII. PSII is a light-driven water plastoquinone oxidoreductase, using light energy to abstract electrons from H(2)O, generating a proton gradient subsequently used for ATP formation. This Oenothera argillicola (Appalachian evening primrose) protein is Photosystem II reaction center protein T.